Here is an 891-residue protein sequence, read N- to C-terminus: Putative alpha,alpha-trehalose-phosphate synthase [UDP-forming] 100 kDa subunit (891 aa).

Threonine 88 is subject to Phosphothreonine. The disordered stretch occupies residues 88–126 (TGGSMTPGLGAMSPIPGSGRSSPLYTQPRSRATSPSRVR). Polar residues predominate over residues 106 to 124 (GRSSPLYTQPRSRATSPSR). 2 positions are modified to phosphoserine: serine 108 and serine 109. A glycosyltransferase region spans residues 132–613 (AAPGIGAGAL…VTGFETKLKK (482 aa)).

This sequence in the N-terminal section; belongs to the glycosyltransferase 20 family.

It catalyses the reaction D-glucose 6-phosphate + UDP-alpha-D-glucose = alpha,alpha-trehalose 6-phosphate + UDP + H(+). The polypeptide is Putative alpha,alpha-trehalose-phosphate synthase [UDP-forming] 100 kDa subunit (Schizosaccharomyces pombe (strain 972 / ATCC 24843) (Fission yeast)).